The sequence spans 187 residues: 5-formyltetrahydrofolate cyclo-ligase (187 aa).

ATP-binding positions include 6–10, 139–146, and D178; these read RQQIR and GMGGGFYD.

It belongs to the 5-formyltetrahydrofolate cyclo-ligase family.

It catalyses the reaction (6S)-5-formyl-5,6,7,8-tetrahydrofolate + ATP = (6R)-5,10-methenyltetrahydrofolate + ADP + phosphate. The protein operates within one-carbon metabolism; tetrahydrofolate interconversion. Functionally, involved in the removal of 5-formyltetrahydrofolate. In vitro, it is a potent inhibitor of various folate-dependent enzymes in the C1 metabolism network and in vivo it might function as a folate storage. 5-formyltetrahydrofolate is also used as an antifolate rescue agent in cancer chemotherapy. Catalyzes the irreversible ATP-dependent transformation of 5-formyltetrahydrofolate (5-CHO-THF) to form 5,10-methenyltetrahydrofolate (5,10-CH=THF). The reverse reaction is catalyzed by the serine hydroxymethyltransferase GlyA (SHMT). This Haemophilus influenzae (strain ATCC 51907 / DSM 11121 / KW20 / Rd) protein is 5-formyltetrahydrofolate cyclo-ligase.